Consider the following 295-residue polypeptide: Diaminopimelate epimerase (295 aa).

The substrate site is built by asparagine 13, glutamine 46, and asparagine 66. Catalysis depends on cysteine 75, which acts as the Proton donor. Residues 76–77 (GN), asparagine 162, asparagine 195, and 213–214 (ER) contribute to the substrate site. Residue cysteine 222 is the Proton acceptor of the active site. Residue 223-224 (GT) coordinates substrate.

It belongs to the diaminopimelate epimerase family. Homodimer.

It localises to the cytoplasm. It catalyses the reaction (2S,6S)-2,6-diaminopimelate = meso-2,6-diaminopimelate. It functions in the pathway amino-acid biosynthesis; L-lysine biosynthesis via DAP pathway; DL-2,6-diaminopimelate from LL-2,6-diaminopimelate: step 1/1. Functionally, catalyzes the stereoinversion of LL-2,6-diaminopimelate (L,L-DAP) to meso-diaminopimelate (meso-DAP), a precursor of L-lysine and an essential component of the bacterial peptidoglycan. This chain is Diaminopimelate epimerase, found in Psychrobacter arcticus (strain DSM 17307 / VKM B-2377 / 273-4).